The following is a 470-amino-acid chain: Probable glycosyltransferase At3g07620 (470 aa).

Topologically, residues 1–7 (MRDYIPK) are cytoplasmic. A helical; Signal-anchor membrane pass occupies residues 8 to 28 (YLNAFLLAFATFAVGFAIFIA). Residues 29-470 (KDSNSSSHLY…WLRRLNVKLL (442 aa)) are Lumenal-facing. Asn-32, Asn-73, Asn-105, Asn-236, Asn-274, and Asn-299 each carry an N-linked (GlcNAc...) asparagine glycan.

The protein belongs to the glycosyltransferase 47 family.

The protein localises to the golgi apparatus membrane. May be involved in cell wall biosynthesis. This chain is Probable glycosyltransferase At3g07620, found in Arabidopsis thaliana (Mouse-ear cress).